The primary structure comprises 507 residues: Histidine ammonia-lyase (507 aa).

Positions 141–143 (ASG) form a cross-link, 5-imidazolinone (Ala-Gly). Ser-142 bears the 2,3-didehydroalanine (Ser) mark.

It belongs to the PAL/histidase family. In terms of processing, contains an active site 4-methylidene-imidazol-5-one (MIO), which is formed autocatalytically by cyclization and dehydration of residues Ala-Ser-Gly.

It localises to the cytoplasm. The catalysed reaction is L-histidine = trans-urocanate + NH4(+). The protein operates within amino-acid degradation; L-histidine degradation into L-glutamate; N-formimidoyl-L-glutamate from L-histidine: step 1/3. In Burkholderia ambifaria (strain MC40-6), this protein is Histidine ammonia-lyase.